Reading from the N-terminus, the 89-residue chain is Small ribosomal subunit protein uS14 (89 aa).

It belongs to the universal ribosomal protein uS14 family. Part of the 30S ribosomal subunit. Contacts proteins S3 and S10.

Binds 16S rRNA, required for the assembly of 30S particles and may also be responsible for determining the conformation of the 16S rRNA at the A site. This is Small ribosomal subunit protein uS14 from Cytophaga hutchinsonii (strain ATCC 33406 / DSM 1761 / CIP 103989 / NBRC 15051 / NCIMB 9469 / D465).